The chain runs to 423 residues: Gamma-glutamyl phosphate reductase (423 aa).

Belongs to the gamma-glutamyl phosphate reductase family.

It is found in the cytoplasm. It carries out the reaction L-glutamate 5-semialdehyde + phosphate + NADP(+) = L-glutamyl 5-phosphate + NADPH + H(+). It participates in amino-acid biosynthesis; L-proline biosynthesis; L-glutamate 5-semialdehyde from L-glutamate: step 2/2. Functionally, catalyzes the NADPH-dependent reduction of L-glutamate 5-phosphate into L-glutamate 5-semialdehyde and phosphate. The product spontaneously undergoes cyclization to form 1-pyrroline-5-carboxylate. The sequence is that of Gamma-glutamyl phosphate reductase from Magnetococcus marinus (strain ATCC BAA-1437 / JCM 17883 / MC-1).